The chain runs to 335 residues: Serpentine receptor class alpha-13 (335 aa).

The Extracellular segment spans residues 1–25 (MAIISSVNRTCASESLLELYRSYKY). Residues 26–46 (ILSTSFNIIIPIISLFFLVYA) traverse the membrane as a helical segment. The Cytoplasmic portion of the chain corresponds to 47–61 (IKQLCAQSIIQYSTR). A helical transmembrane segment spans residues 62–82 (VLLITTILFAVCHQIAYFCFK). The Extracellular portion of the chain corresponds to 83–108 (ADLLYTMLFKLDQPCNLQHSSYDCRF). The helical transmembrane segment at 109 to 129 (ITIATTTSNCGMALVQLAMSI) threads the bilayer. The Cytoplasmic portion of the chain corresponds to 130–146 (DRVFALKFNRVYYKLKS). Residues 147–167 (IPGITLALITLSISFSMFFIL) form a helical membrane-spanning segment. Residues 168–192 (TIDDPLSGYVNHCGFYPTYSQDKFH) lie on the Extracellular side of the membrane. The chain crosses the membrane as a helical span at residues 193–213 (IFLDVTLYLAVFNFVFDIGLM). Topologically, residues 214–243 (YYSYQEILWKRSYSFVNRFQSRISLKCTQA) are cytoplasmic. A helical transmembrane segment spans residues 244 to 264 (IFIISICQCISNVLYSGLLSL). Residues 265–278 (LMKLGRYMSSADYN) are Extracellular-facing. A helical membrane pass occupies residues 279-299 (LSLSLAYTTPYSCLILPILIC). At 300–335 (KVLEYIKKQRTVGILSLRNQKQSMEGHMAMINSAWK) the chain is on the cytoplasmic side.

The protein belongs to the nematode receptor-like protein sra family. As to expression, expressed in the AWA and AWC chemosensory neurons.

Its subcellular location is the membrane. Chemosensory receptor that negatively regulates RAS/MAPK signaling during vulva induction and the negative regulation of olfaction of volitile attractants. Required for the suppression of vulval induction in response to food starvation. Signaling acts through the GPA-5 G-alpha protein subunit. This Caenorhabditis elegans protein is Serpentine receptor class alpha-13 (sra-13).